We begin with the raw amino-acid sequence, 495 residues long: L-arabinose isomerase (495 aa).

E305, E332, H349, and H448 together coordinate Mn(2+).

Belongs to the arabinose isomerase family. It depends on Mn(2+) as a cofactor.

The enzyme catalyses beta-L-arabinopyranose = L-ribulose. It participates in carbohydrate degradation; L-arabinose degradation via L-ribulose; D-xylulose 5-phosphate from L-arabinose (bacterial route): step 1/3. Functionally, catalyzes the conversion of L-arabinose to L-ribulose. This is L-arabinose isomerase from Actinobacillus succinogenes (strain ATCC 55618 / DSM 22257 / CCUG 43843 / 130Z).